The following is a 230-amino-acid chain: Urease accessory protein UreF (230 aa).

Belongs to the UreF family. UreD, UreF and UreG form a complex that acts as a GTP-hydrolysis-dependent molecular chaperone, activating the urease apoprotein by helping to assemble the nickel containing metallocenter of UreC. The UreE protein probably delivers the nickel.

It localises to the cytoplasm. Required for maturation of urease via the functional incorporation of the urease nickel metallocenter. This is Urease accessory protein UreF from Cupriavidus necator (strain ATCC 17699 / DSM 428 / KCTC 22496 / NCIMB 10442 / H16 / Stanier 337) (Ralstonia eutropha).